We begin with the raw amino-acid sequence, 438 residues long: tRNA modification GTPase MnmE (438 aa).

(6S)-5-formyl-5,6,7,8-tetrahydrofolate contacts are provided by R21, E79, and K118. In terms of domain architecture, TrmE-type G spans 215–362 (GFSIVLIGAP…LEARIEQIVR (148 aa)). N225 contributes to the K(+) binding site. Residues 225 to 230 (NAGKSS), 244 to 250 (TDIPGTT), and 269 to 272 (DTAG) contribute to the GTP site. S229 provides a ligand contact to Mg(2+). K(+) is bound by residues T244, I246, and T249. T250 provides a ligand contact to Mg(2+). K438 is a binding site for (6S)-5-formyl-5,6,7,8-tetrahydrofolate.

It belongs to the TRAFAC class TrmE-Era-EngA-EngB-Septin-like GTPase superfamily. TrmE GTPase family. Homodimer. Heterotetramer of two MnmE and two MnmG subunits. The cofactor is K(+).

Its subcellular location is the cytoplasm. Exhibits a very high intrinsic GTPase hydrolysis rate. Involved in the addition of a carboxymethylaminomethyl (cmnm) group at the wobble position (U34) of certain tRNAs, forming tRNA-cmnm(5)s(2)U34. The chain is tRNA modification GTPase MnmE from Maricaulis maris (strain MCS10) (Caulobacter maris).